A 502-amino-acid polypeptide reads, in one-letter code: Probable RNA exonuclease C9B6.11c (502 aa).

Positions Ser338–Lys379 are disordered. Residues Glu341–Asn351 are compositionally biased toward basic and acidic residues. Low complexity predominate over residues Ser363–Thr376.

This sequence belongs to the CCR4/nocturin family.

It is found in the cytoplasm. Its subcellular location is the nucleus. This chain is Probable RNA exonuclease C9B6.11c, found in Schizosaccharomyces pombe (strain 972 / ATCC 24843) (Fission yeast).